A 219-amino-acid polypeptide reads, in one-letter code: 2-hydroxy-3-keto-5-methylthiopentenyl-1-phosphate phosphatase (219 aa).

Belongs to the HAD-like hydrolase superfamily. MtnX family.

It catalyses the reaction 2-hydroxy-5-methylsulfanyl-3-oxopent-1-enyl phosphate + H2O = 1,2-dihydroxy-5-(methylsulfanyl)pent-1-en-3-one + phosphate. It functions in the pathway amino-acid biosynthesis; L-methionine biosynthesis via salvage pathway; L-methionine from S-methyl-5-thio-alpha-D-ribose 1-phosphate: step 4/6. In terms of biological role, dephosphorylates 2-hydroxy-3-keto-5-methylthiopentenyl-1-phosphate (HK-MTPenyl-1-P) yielding 1,2-dihydroxy-3-keto-5-methylthiopentene (DHK-MTPene). The sequence is that of 2-hydroxy-3-keto-5-methylthiopentenyl-1-phosphate phosphatase from Bacillus thuringiensis (strain Al Hakam).